The following is a 94-amino-acid chain: Defensin-7 (94 aa).

A signal peptide spans 1-19; the sequence is MRTLTLLSAFLLVALQAWA. Disulfide bonds link cysteine 65/cysteine 93 and cysteine 72/cysteine 92.

This sequence belongs to the alpha-defensin family.

It is found in the secreted. Its function is as follows. Has antimicrobial activity. In Pan troglodytes (Chimpanzee), this protein is Defensin-7 (DEFA7).